Here is a 280-residue protein sequence, read N- to C-terminus: Chorismate mutase (280 aa).

One can recognise a Chorismate mutase domain in the interval 3–256 (FMKPETVLDL…EVDYLLRRLE (254 aa)). The L-tyrosine site is built by Arg73, Arg74, Asn137, Gly139, and Ser140. Positions 137, 139, and 140 each coordinate L-tryptophan.

As to quaternary structure, homodimer.

The protein localises to the cytoplasm. The catalysed reaction is chorismate = prephenate. It functions in the pathway metabolic intermediate biosynthesis; prephenate biosynthesis; prephenate from chorismate: step 1/1. With respect to regulation, each dimer has two allosteric binding sites that can bind the regulatory effectors tryptophan or tyrosine. Can bind either one tryptophan or one tyrosine, two tryptophan or two tyrosine or one tryptophan and one tyrosine, which differentially affect the catalytic activity. Activated by tryptophan and subject to feedback inhibition by tyrosine. In the presence of both tryptophan and tyrosine, the enzyme is in the activated state. Functionally, catalyzes the Claisen rearrangement of chorismate to prephenate. Acts at the first branch point in the aromatic amino acid pathway where it steers biosynthesis towards phenylalanine and tyrosine, and away from tryptophan. This chain is Chorismate mutase, found in Pichia angusta (Yeast).